The chain runs to 131 residues: Sulfurtransferase TusD (131 aa).

Cys-81 acts as the Cysteine persulfide intermediate in catalysis.

The protein belongs to the DsrE/TusD family. As to quaternary structure, heterohexamer, formed by a dimer of trimers. The hexameric TusBCD complex contains 2 copies each of TusB, TusC and TusD. The TusBCD complex interacts with TusE.

It is found in the cytoplasm. In terms of biological role, part of a sulfur-relay system required for 2-thiolation of 5-methylaminomethyl-2-thiouridine (mnm(5)s(2)U) at tRNA wobble positions. Accepts sulfur from TusA and transfers it in turn to TusE. In Photorhabdus laumondii subsp. laumondii (strain DSM 15139 / CIP 105565 / TT01) (Photorhabdus luminescens subsp. laumondii), this protein is Sulfurtransferase TusD.